A 451-amino-acid polypeptide reads, in one-letter code: Phosphoglucosamine mutase (451 aa).

Catalysis depends on Ser-107, which acts as the Phosphoserine intermediate. 4 residues coordinate Mg(2+): Ser-107, Asp-246, Asp-248, and Asp-250. Ser-107 carries the post-translational modification Phosphoserine.

This sequence belongs to the phosphohexose mutase family. Mg(2+) is required as a cofactor. Post-translationally, activated by phosphorylation.

The catalysed reaction is alpha-D-glucosamine 1-phosphate = D-glucosamine 6-phosphate. Its function is as follows. Catalyzes the conversion of glucosamine-6-phosphate to glucosamine-1-phosphate. In Burkholderia cenocepacia (strain HI2424), this protein is Phosphoglucosamine mutase.